The following is a 395-amino-acid chain: L-methionine gamma-lyase (395 aa).

Residues 56–58 (YTR) and 86–87 (GM) contribute to the pyridoxal 5'-phosphate site. Tyrosine 111 is a substrate binding site. A pyridoxal 5'-phosphate-binding site is contributed by 206-208 (SAT). Residue lysine 209 is modified to N6-(pyridoxal phosphate)lysine. Substrate is bound at residue arginine 373.

This sequence belongs to the trans-sulfuration enzymes family. L-methionine gamma-lyase subfamily. As to quaternary structure, homotetramer. Pyridoxal 5'-phosphate serves as cofactor.

The catalysed reaction is L-methionine + H2O = methanethiol + 2-oxobutanoate + NH4(+). The enzyme catalyses L-homocysteine + H2O = 2-oxobutanoate + hydrogen sulfide + NH4(+) + H(+). It carries out the reaction L-cysteine + H2O = hydrogen sulfide + pyruvate + NH4(+) + H(+). In terms of biological role, catalyzes the alpha,gamma-elimination of L-methionine to produce methanethiol, 2-oxobutanoate and ammonia, and that of L-homocysteine. Can also use L-cysteine as substrate, catalyzing its alpha,beta-elimination; this activity seems to only minimally contribute to the production of hydrogen sulfide (H2S) by F.nucleatum in the oral cavity, which is toxic for a large variety of cells in periodontal regions. In Fusobacterium nucleatum subsp. nucleatum (strain ATCC 25586 / DSM 15643 / BCRC 10681 / CIP 101130 / JCM 8532 / KCTC 2640 / LMG 13131 / VPI 4355), this protein is L-methionine gamma-lyase.